A 380-amino-acid chain; its full sequence is Glucose-1-phosphate adenylyltransferase (380 aa).

Alpha-D-glucose 1-phosphate-binding positions include glycine 164, 179-180 (EK), and serine 190.

The protein belongs to the bacterial/plant glucose-1-phosphate adenylyltransferase family. In terms of assembly, homotetramer.

The catalysed reaction is alpha-D-glucose 1-phosphate + ATP + H(+) = ADP-alpha-D-glucose + diphosphate. It functions in the pathway glycan biosynthesis; glycogen biosynthesis. Its function is as follows. Involved in the biosynthesis of ADP-glucose, a building block required for the elongation reactions to produce glycogen. Catalyzes the reaction between ATP and alpha-D-glucose 1-phosphate (G1P) to produce pyrophosphate and ADP-Glc. This chain is Glucose-1-phosphate adenylyltransferase, found in Lacticaseibacillus casei (strain BL23) (Lactobacillus casei).